We begin with the raw amino-acid sequence, 565 residues long: Perivitellin-2 67 kDa subunit (565 aa).

The signal sequence occupies residues 1-26; sequence MSQLRWWVVSQLLLLIVVCILDHSEG. An MACPF domain is found at 27–340; sequence ARVCPKIVPG…AKVANLDRLT (314 aa).

As to quaternary structure, perivitellin-2 is a heterooctamer of 4 identical 98 kDa heterodimers, each composed of one 31 kDa and one 67 kDa subunits. The 98 kDa heterodimer subunits are held together by disulfide bridges while the heterodimers are assembled into the native perivitellin-2 octamer by non-covalent forces. In terms of processing, glycosylated. Contains four O-linked and one N-linked oligosaccharide bonds. The protein contains 2.5% of carbohydrates (high levels of mannose, galactose, and NAcGlucosamine, and small amounts of NacGalactosamine). PV2 is a very high density lipoprotein (VHDL). It contains 3.75% of lipids. The major lipid classes are free sterols and phospholipids and also have significant quantities of energy-providing triacylglycerides and free fatty acids. In terms of tissue distribution, produced by albumen secretory cells. Found in developing eggs.

It is found in the secreted. The protein localises to the target cell membrane. The egg defensive protein perivitellin-2 is a pore-forming two-subunit glycoprotein that affects both the nervous and digestive systems of mammals. In addition, it is a source of both structural and energetic molecules during embryonic development. The tachylectin subunit (31 kDa) binds target membranes while the MACPF subunit (67 kDa) disrupts lipid bilayers forming large pores altering the plasma membrance conductance. Both in vivo and in vitro, the protein shows wide pH range stability and is resistant to enzymatic proteolysis from gastrointestinal environments. It specifically binds mature enterocytes but does not cause cell disruption on caco-2 (human colorectal adenocarcinoma cells) or rat intestinal cells. After oral administration to mice, it binds enterocytes and induces large dose-dependent morphological changes on their small intestine mucosa, reducing the absorptive surface. Additionally, it is detected in the Peyer's patches where it activates lymphoid follicles and triggers apoptosis. The toxin can also traverse the intestinal barrier and induce oral adaptive immunity with evidence of circulating antibody response. The toxin also shows hemagglutination properties thanks to the tachylectin subunit, but does not show hemolytic activity. In addition to enterotoxin activity, the toxin also acts as a neurotoxin, since an intraperitoneal injection induces paralysis of the mice rear limbs, followed by death. The chain is Perivitellin-2 67 kDa subunit from Pomacea canaliculata (Golden apple snail).